We begin with the raw amino-acid sequence, 448 residues long: MSSHVSNNSILDPVTFWNQANKSLIRYGGDFAPKIIVRAKGCCVYDEQDNAILDFTSGQMSAILGHSHPDITACIEKNLPKLVHLFSGFLSPPVVQLATELSDLLPDGLDKTLFLSTGGEANEAALRMAKVYTNKYECVAFSSSWHGVTGGAASLTFAAARRGYGPALPGSYTIPEPNPKLSPFRDAKGNYDWQKELDYSFYMLDKQSTGSLACMIVETILSTGGIIELPQGYLKALKKKCEERGMLLIIDEAQTGIGRTGSMFSFEHHGIVPDILTLSKSLGAGTALAAVITSEEIEKVCYDNGFVFYTTHASDPLPAAIGSTVLKVVKRDNLVEKAKISGELLRSDLLRLKDKHPLIVDVRGLGLLQGIEIASCTDPSKPSDFLGTVIGDKCLELGMNCNIVHLRGIGGVFRIAPPLTVTDEEIHKAIEIFDSALTFTAKEFSGSY.

N6-(pyridoxal phosphate)lysine is present on K280.

This sequence belongs to the class-III pyridoxal-phosphate-dependent aminotransferase family.

Its subcellular location is the cytoplasm. It localises to the mitochondrion. This is an uncharacterized protein from Schizosaccharomyces pombe (strain 972 / ATCC 24843) (Fission yeast).